Consider the following 197-residue polypeptide: Protein Hikeshi (197 aa).

Positions 18–55 (VAEDKFVFDLPDYESINHVVVFMLGTIPFPEGMGGSVY) are required for F-X-F-G repeats-nucleoporins recognition and nuclear import. Residues 124–134 (QTPVGNAAVSS) are flexible linker region involved in nuclear import of HSP70 proteins.

The protein belongs to the OPI10 family. As to quaternary structure, forms an asymmetric homodimer; required for binding and nuclear import of HSP70 proteins. Interacts with ATP-bound HSP70 proteins. Interacts with NUP62 and NUP153 (via F-X-F-G repeats). Interacts with HSPA8.

Its subcellular location is the cytoplasm. It localises to the cytosol. The protein localises to the nucleus. In terms of biological role, acts as a specific nuclear import carrier for HSP70 proteins following heat-shock stress: acts by mediating the nucleoporin-dependent translocation of ATP-bound HSP70 proteins into the nucleus. HSP70 proteins import is required to protect cells from heat shock damages. Does not translocate ADP-bound HSP70 proteins into the nucleus. The sequence is that of Protein Hikeshi from Homo sapiens (Human).